Consider the following 427-residue polypeptide: Glutamate-1-semialdehyde 2,1-aminomutase (427 aa).

Residue Lys-268 is modified to N6-(pyridoxal phosphate)lysine.

The protein belongs to the class-III pyridoxal-phosphate-dependent aminotransferase family. HemL subfamily. It depends on pyridoxal 5'-phosphate as a cofactor.

The protein resides in the cytoplasm. The enzyme catalyses (S)-4-amino-5-oxopentanoate = 5-aminolevulinate. Its pathway is porphyrin-containing compound metabolism; protoporphyrin-IX biosynthesis; 5-aminolevulinate from L-glutamyl-tRNA(Glu): step 2/2. This chain is Glutamate-1-semialdehyde 2,1-aminomutase, found in Methanococcus maripaludis (strain C6 / ATCC BAA-1332).